We begin with the raw amino-acid sequence, 610 residues long: MTEQFDSKTFLKTVTSQPGVYRMYDTSGTVIYVGKAKDLKKRLASYFRAQVTSRKTESLVKNIVQIDVTVTHTETEALLLEHNYIKLYQPRYNVLLRDDKSYPYIFLSADKHPRLAMYRGAKHFKGEYFGPFPNTHAVRESLILLQKLFPIRQCEDSVYRNRSRPCLQYQIGRCLGPCVKGLVSEDEYQQQVDYIRLFLSGKDQQVLTRLIERMEQASQQLKFEDAARYRDQIQAVRQVTERQFVSGTDDDLDVISVAFDAGMACLHVLFIRQGKVLGSRSYYPKIPTGTTLDEIVQTFLGQFYLQGSQNRTLPSEILLDFTLPEKDILSDSLSEISGRKIHIQTRPRGDKARYLKLARTNATIALSTRLSQQSTIHQRLDSLTKLVKLAKIQRMECFDISHTMGEQTVASCVVFDSNGPLRSEYRRYNISGITPGDDYAAMNQVLRRRYGKALDESKIPDIIFIDGGKGQLAQAIDVFQSLDVEWDKTRPQLIGVAKGSDRKAGLETLFFATEDKSIALPPDSPALHVIQHIRDESHNHAITGHRQRRSKVRNTSTLESIEGVGPKRRQMLLKYMGGLQPLRNASVEEIAKVPTISYALAEKIYNALKH.

Residues 16 to 94 form the GIY-YIG domain; the sequence is SQPGVYRMYD…IKLYQPRYNV (79 aa). Positions 204–239 constitute a UVR domain; the sequence is QQVLTRLIERMEQASQQLKFEDAARYRDQIQAVRQV.

This sequence belongs to the UvrC family. As to quaternary structure, interacts with UvrB in an incision complex.

It localises to the cytoplasm. Functionally, the UvrABC repair system catalyzes the recognition and processing of DNA lesions. UvrC both incises the 5' and 3' sides of the lesion. The N-terminal half is responsible for the 3' incision and the C-terminal half is responsible for the 5' incision. The polypeptide is UvrABC system protein C (Photorhabdus laumondii subsp. laumondii (strain DSM 15139 / CIP 105565 / TT01) (Photorhabdus luminescens subsp. laumondii)).